The sequence spans 194 residues: Molybdenum cofactor guanylyltransferase (194 aa).

GTP is bound by residues 12–14 (LAG), Lys25, Asn53, Asp71, and Asp101. Asp101 lines the Mg(2+) pocket.

The protein belongs to the MobA family. Monomer. Requires Mg(2+) as cofactor.

The protein resides in the cytoplasm. It carries out the reaction Mo-molybdopterin + GTP + H(+) = Mo-molybdopterin guanine dinucleotide + diphosphate. Transfers a GMP moiety from GTP to Mo-molybdopterin (Mo-MPT) cofactor (Moco or molybdenum cofactor) to form Mo-molybdopterin guanine dinucleotide (Mo-MGD) cofactor. The polypeptide is Molybdenum cofactor guanylyltransferase (Escherichia coli O157:H7).